Here is a 51-residue protein sequence, read N- to C-terminus: Cytochrome bd ubiquinol oxidase subunit X (51 aa).

Residues Met-1–Tyr-3 lie on the Cytoplasmic side of the membrane. A helical membrane pass occupies residues Phe-4–Leu-26. Residues Met-27–His-51 lie on the Periplasmic side of the membrane.

This sequence belongs to the cytochrome ubiquinol oxidase subunit X family. As to quaternary structure, may be a subunit of cytochrome ubiquinol oxidase.

It is found in the cell inner membrane. It carries out the reaction 2 a ubiquinol + O2(in) + 4 H(+)(in) = 2 a ubiquinone + 2 H2O(in) + 4 H(+)(out). It participates in energy metabolism; oxidative phosphorylation. In terms of biological role, required for correct functioning of cytochrome bd oxidase. This Brucella abortus (strain 2308) protein is Cytochrome bd ubiquinol oxidase subunit X (cydX).